The following is a 294-amino-acid chain: Protein C3orf33 (294 aa).

A2 is modified (N-acetylalanine). Residues 40–56 form a helical membrane-spanning segment; the sequence is ISTGMAIAGIMLLLRSI.

As to expression, highly expressed in ileocecal tissue and endometrium.

Its subcellular location is the membrane. It is found in the secreted. Functionally, secreted protein may play a role in transcription regulation via the MAPK3/MAPK1 pathway through an unidentified receptor on the plasma membrane. The chain is Protein C3orf33 (C3orf33) from Homo sapiens (Human).